The sequence spans 43 residues: MYRRLLLNLFCMVFLQACLKPMSDPKAEKVDSQVQCGFGSKDC.

The signal sequence occupies residues M1–A17.

This is an uncharacterized protein from Helicobacter pylori (strain J99 / ATCC 700824) (Campylobacter pylori J99).